A 293-amino-acid polypeptide reads, in one-letter code: AA9 family lytic polysaccharide monooxygenase E (293 aa).

The N-terminal stretch at 1–19 (MKGLLSVAALSLAVSEVSA) is a signal peptide. Cu(2+) contacts are provided by histidine 20 and histidine 90. Cysteine 59 and cysteine 172 are joined by a disulfide. Positions 158 and 167 each coordinate O2. Tyrosine 169 lines the Cu(2+) pocket. The region spanning 257 to 293 (CAVAKWGQCGGNGWTGCTTCAAGSTCNTQNAYYHQCV) is the CBM1 domain.

This sequence belongs to the polysaccharide monooxygenase AA9 family. Cu(2+) is required as a cofactor.

The protein resides in the secreted. The catalysed reaction is [(1-&gt;4)-beta-D-glucosyl]n+m + reduced acceptor + O2 = 4-dehydro-beta-D-glucosyl-[(1-&gt;4)-beta-D-glucosyl]n-1 + [(1-&gt;4)-beta-D-glucosyl]m + acceptor + H2O.. Glucose dehydrogenase and aryl-alcohol quinone oxidoreductases regulate the oxidative degradation of cellulose since they can act as catalytically efficient electron donors for LPMO9E. Lytic polysaccharide monooxygenase (LPMO) that depolymerizes crystalline and amorphous polysaccharides via the oxidation of scissile alpha- or beta-(1-4)-glycosidic bonds, yielding only C1 oxidation products. Catalysis by LPMOs requires the reduction of the active-site copper from Cu(II) to Cu(I) by a reducing agent and H(2)O(2) or O(2) as a cosubstrate. Improves the progression of lytic enzymes in delignified miscanthus cell walls. This boosting effect dependents on the cellular type which indicates contrasted recalcitrance levels in plant tissues. The sequence is that of AA9 family lytic polysaccharide monooxygenase E from Podospora anserina (strain S / ATCC MYA-4624 / DSM 980 / FGSC 10383) (Pleurage anserina).